Here is a 286-residue protein sequence, read N- to C-terminus: Aquaporin PIP1-3 (286 aa).

Methionine 1 is subject to N-acetylmethionine. A disordered region spans residues 1–33 (MEGKEEDVRVGANKFPERQPIGTSAQTDKDYKE). The Cytoplasmic portion of the chain corresponds to 1 to 54 (MEGKEEDVRVGANKFPERQPIGTSAQTDKDYKEPPPAPFFEPGELSSWSFYRAG). Residues 55 to 75 (IAEFIATFLFLYITVLTVMGV) traverse the membrane as a helical segment. The Extracellular portion of the chain corresponds to 76-81 (KRAPNM). The helical transmembrane segment at 82 to 102 (CASVGIQGIAWAFGGMIFALV) threads the bilayer. At 103–132 (YCTAGISGGHINPAVTFGLFLARKLSLTRA) the chain is on the cytoplasmic side. The short motif at 114-116 (NPA) is the NPA 1 element. A helical transmembrane segment spans residues 133–153 (VFYIVMQCLGAICGAGVVKGF). The Extracellular segment spans residues 154-174 (QPNPYQTLGGGANTVAHGYTK). A helical transmembrane segment spans residues 175-195 (GSGLGAEIIGTFVLVYTVFSA). Residues 196 to 208 (TDAKRSARDSHVP) are Cytoplasmic-facing. A helical transmembrane segment spans residues 209 to 229 (ILAPLPIGFAVFLVHLATIPI). Residues 230-256 (TGTGINPARSLGAAIIYNKDHAWDDHW) lie on the Extracellular side of the membrane. The NPA 2 motif lies at 235–237 (NPA). The helical transmembrane segment at 257–277 (IFWVGPFIGAALAALYHQLVI) threads the bilayer. The Cytoplasmic segment spans residues 278-286 (RAIPFKSRS). Residue serine 284 is modified to Phosphoserine.

Belongs to the MIP/aquaporin (TC 1.A.8) family. PIP (TC 1.A.8.11) subfamily. Expressed in roots, above ground, ripening fruit, flower buds, green siliques and senescing leaves.

It localises to the cell membrane. Water channel required to facilitate the transport of water across cell membrane. Its function is impaired by Hg(2+). The chain is Aquaporin PIP1-3 (PIP1-3) from Arabidopsis thaliana (Mouse-ear cress).